A 369-amino-acid chain; its full sequence is Peptide chain release factor 2 (369 aa).

Position 251 is an N5-methylglutamine (Gln-251).

It belongs to the prokaryotic/mitochondrial release factor family. In terms of processing, methylated by PrmC. Methylation increases the termination efficiency of RF2.

Its subcellular location is the cytoplasm. Its function is as follows. Peptide chain release factor 2 directs the termination of translation in response to the peptide chain termination codons UGA and UAA. This is Peptide chain release factor 2 from Campylobacter fetus subsp. fetus (strain 82-40).